An 898-amino-acid chain; its full sequence is Chitin synthase 1 (898 aa).

The interval 1–154 (MDPRYGAQPM…PPQQGGGIQR (154 aa)) is disordered. Over residues 9–21 (PMPPRRSPSPGHP) the composition is skewed to pro residues. Polar residues-rich tracts occupy residues 64–75 (DHLSLNAAQSVD) and 136–146 (DVPSEQYQDPP). 5 helical membrane passes run 441-461 (SAFGFISVLPGAFSAYRYVAL), 540-560 (RWLNGSFFAAIYAIVHFLDFL), 570-590 (FAFFIEFIFNTINMIFAWFAI), 616-636 (ILGVVFTWLYGVFLITCFVLS), and 651-671 (MCWFWAIIMIYLMFAAVFISV). Residue Asn685 is glycosylated (N-linked (GlcNAc...) asparagine). Transmembrane regions (helical) follow at residues 697–717 (MLIISLMSTYGIWLIASLIML), 726–746 (FAQYMLLTPTFTNVLNVYAFC), 825–845 (GVVLLWMVTNFGLAAIVLSSA), and 870–890 (IVLWSVAGLSAFKFIGAMWFL).

It belongs to the chitin synthase family. Class I subfamily.

The protein localises to the cell membrane. It carries out the reaction [(1-&gt;4)-N-acetyl-beta-D-glucosaminyl](n) + UDP-N-acetyl-alpha-D-glucosamine = [(1-&gt;4)-N-acetyl-beta-D-glucosaminyl](n+1) + UDP + H(+). Its function is as follows. Polymerizes chitin, a structural polymer of the cell wall and septum, by transferring the sugar moiety of UDP-GlcNAc to the non-reducing end of the growing chitin polymer. Shows additive effects in septum formation with CHS2, CHS3A, CHS4, CHS5, CHS6 and CHS7. Regulates mycelial growth and conidiation. Involved in virulence and mediates mycotoxin deoxinivalenol (DON) biosynthesis via the regulation of the expression of TRI4, TRI5 and TRI6. The polypeptide is Chitin synthase 1 (Gibberella zeae (strain ATCC MYA-4620 / CBS 123657 / FGSC 9075 / NRRL 31084 / PH-1) (Wheat head blight fungus)).